The chain runs to 424 residues: Serine hydroxymethyltransferase 2 (424 aa).

(6S)-5,6,7,8-tetrahydrofolate contacts are provided by residues Leu125 and 129–131 (GHL). Lys234 bears the N6-(pyridoxal phosphate)lysine mark. Glu250 lines the (6S)-5,6,7,8-tetrahydrofolate pocket.

Belongs to the SHMT family. As to quaternary structure, homodimer. Pyridoxal 5'-phosphate is required as a cofactor.

It localises to the cytoplasm. The catalysed reaction is (6R)-5,10-methylene-5,6,7,8-tetrahydrofolate + glycine + H2O = (6S)-5,6,7,8-tetrahydrofolate + L-serine. The protein operates within one-carbon metabolism; tetrahydrofolate interconversion. It participates in amino-acid biosynthesis; glycine biosynthesis; glycine from L-serine: step 1/1. Its function is as follows. Catalyzes the reversible interconversion of serine and glycine with tetrahydrofolate (THF) serving as the one-carbon carrier. This reaction serves as the major source of one-carbon groups required for the biosynthesis of purines, thymidylate, methionine, and other important biomolecules. Also exhibits THF-independent aldolase activity toward beta-hydroxyamino acids, producing glycine and aldehydes, via a retro-aldol mechanism. This chain is Serine hydroxymethyltransferase 2, found in Ralstonia nicotianae (strain ATCC BAA-1114 / GMI1000) (Ralstonia solanacearum).